A 260-amino-acid polypeptide reads, in one-letter code: UPF0246 protein APP7_0648 (260 aa).

This sequence belongs to the UPF0246 family.

The sequence is that of UPF0246 protein APP7_0648 from Actinobacillus pleuropneumoniae serotype 7 (strain AP76).